A 361-amino-acid chain; its full sequence is Phosphoribosylformylglycinamidine cyclo-ligase (361 aa).

It belongs to the AIR synthase family.

The protein resides in the cytoplasm. It catalyses the reaction 2-formamido-N(1)-(5-O-phospho-beta-D-ribosyl)acetamidine + ATP = 5-amino-1-(5-phospho-beta-D-ribosyl)imidazole + ADP + phosphate + H(+). The protein operates within purine metabolism; IMP biosynthesis via de novo pathway; 5-amino-1-(5-phospho-D-ribosyl)imidazole from N(2)-formyl-N(1)-(5-phospho-D-ribosyl)glycinamide: step 2/2. This Bartonella quintana (strain Toulouse) (Rochalimaea quintana) protein is Phosphoribosylformylglycinamidine cyclo-ligase.